A 357-amino-acid chain; its full sequence is Peptide chain release factor 1 (357 aa).

Position 234 is an N5-methylglutamine (Gln234).

Belongs to the prokaryotic/mitochondrial release factor family. Methylated by PrmC. Methylation increases the termination efficiency of RF1.

It is found in the cytoplasm. Peptide chain release factor 1 directs the termination of translation in response to the peptide chain termination codons UAG and UAA. This is Peptide chain release factor 1 from Lactococcus lactis subsp. cremoris (strain SK11).